The primary structure comprises 514 residues: Glutathione-binding protein GsiB (514 aa).

A signal peptide spans 1–27; the sequence is MSVMTIQRRWLVAAGVTAAMVASPVWA.

Belongs to the bacterial solute-binding protein 5 family. As to quaternary structure, the complex is composed of two ATP-binding proteins (GsiA), two transmembrane proteins (GsiC and GsiD) and a solute-binding protein (GsiB).

It is found in the periplasm. Functionally, part of the ABC transporter complex GsiABCD involved in glutathione import. Binds glutathione. This chain is Glutathione-binding protein GsiB, found in Pectobacterium atrosepticum (strain SCRI 1043 / ATCC BAA-672) (Erwinia carotovora subsp. atroseptica).